Reading from the N-terminus, the 118-residue chain is C-type natriuretic peptide 2 (118 aa).

Residues methionine 1–alanine 22 form the signal peptide. Positions lysine 23–lysine 96 are excised as a propeptide. Cysteine 102 and cysteine 118 form a disulfide bridge.

The protein belongs to the natriuretic peptide family.

Its subcellular location is the secreted. Exhibits natriuretic and vasodepressor activity. Has a cGMP-stimulating activity. The chain is C-type natriuretic peptide 2 from Aquarana catesbeiana (American bullfrog).